The chain runs to 458 residues: Hyaluronidase conohyal-P1 (458 aa).

The N-terminal stretch at 1–18 (MRVVVVVTGLVVVVVATA) is a signal peptide. A disordered region spans residues 24–47 (HDVKSASSPLSSSSVYQGSSGDDC). Positions 28 to 43 (SASSPLSSSSVYQGSS) are enriched in low complexity. A disulfide bond links cysteine 68 and cysteine 342. Residues asparagine 106 and asparagine 141 are each glycosylated (N-linked (GlcNAc...) asparagine). Glutamate 151 acts as the Proton donor in catalysis. Residues asparagine 261, asparagine 337, and asparagine 359 are each glycosylated (N-linked (GlcNAc...) asparagine). Positions 363-434 (VMADCSTTLC…VRPSRCHKQQ (72 aa)) constitute an EGF-like domain. 3 cysteine pairs are disulfide-bonded: cysteine 367–cysteine 378, cysteine 372–cysteine 411, and cysteine 413–cysteine 422.

The protein belongs to the glycosyl hydrolase 56 family. As to expression, expressed by the venom duct.

It is found in the secreted. It catalyses the reaction Random hydrolysis of (1-&gt;4)-linkages between N-acetyl-beta-D-glucosamine and D-glucuronate residues in hyaluronate.. Functionally, hyaluronidase catalyzes the hydrolysis of hyaluronic acid (HA), an anionic, nonsulfated glycosaminoglycan distributed widely throughout connective, epithelial, and neural tissues. In venom, they are known to enhance diffusion of the venom by degrading the extracellular matrix. In Conus purpurascens (Purple cone), this protein is Hyaluronidase conohyal-P1.